The sequence spans 137 residues: NADH dehydrogenase [ubiquinone] 1 beta subcomplex subunit 7 (137 aa).

Gly-2 is lipidated: N-myristoyl glycine. Residues 56-98 (RDYCAHYLIRLLKCKRDSFPNFLACKHEQHDWDYCEHLDYVKR) form the CHCH domain. The Cx9C motif 1 motif lies at 59–69 (CAHYLIRLLKC). 2 disulfide bridges follow: Cys-59/Cys-90 and Cys-69/Cys-80. Ser-73 is modified (phosphoserine). The Cx9C motif 2 motif lies at 80-90 (CKHEQHDWDYC).

It belongs to the complex I NDUFB7 subunit family. In terms of assembly, complex I is composed of 45 different subunits.

The protein resides in the mitochondrion inner membrane. It localises to the mitochondrion intermembrane space. In terms of biological role, accessory subunit of the mitochondrial membrane respiratory chain NADH dehydrogenase (Complex I), that is believed not to be involved in catalysis. Complex I functions in the transfer of electrons from NADH to the respiratory chain. The immediate electron acceptor for the enzyme is believed to be ubiquinone. The sequence is that of NADH dehydrogenase [ubiquinone] 1 beta subcomplex subunit 7 (Ndufb7) from Mus musculus (Mouse).